The primary structure comprises 199 residues: Protein shisa-like-1 (199 aa).

Residues 1–25 (MTSCGQQSLNVLAVLFSLLFSAVLS) form the signal peptide. At 26 to 97 (AHFRVCEPYT…SEGYMHNNYT (72 aa)) the chain is on the extracellular side. N-linked (GlcNAc...) asparagine glycosylation is found at asparagine 53 and asparagine 95. A helical transmembrane segment spans residues 98–118 (ALLGVWIYGFFVLMLLVLDLL). Topologically, residues 119–199 (YYSAMNYDIC…PLMTFQSSSA (81 aa)) are cytoplasmic. Residues 146–199 (PRRWGNPARAPRPGQRAPQPQPPPGPLPQAPQAVHTLRGDAHSPPLMTFQSSSA) form a disordered region. Over residues 152–163 (PARAPRPGQRAP) the composition is skewed to low complexity. Residues 164 to 174 (QPQPPPGPLPQ) are compositionally biased toward pro residues.

Belongs to the shisa family.

Its subcellular location is the membrane. This is Protein shisa-like-1 from Homo sapiens (Human).